A 510-amino-acid polypeptide reads, in one-letter code: Nectin-4 (510 aa).

Residues 1 to 31 form the signal peptide; the sequence is MPLSLGAEMWGPAAWLLLLLLLASFTGQRLA. An Ig-like V-type domain is found at 32 to 144; sequence GELETSDLVT…GSFQARLRLR (113 aa). At 32–349 the chain is on the extracellular side; the sequence is GELETSDLVT…GKQVDLVSAS (318 aa). 3 disulfide bridges follow: Cys52–Cys127, Cys171–Cys223, and Cys270–Cys315. Ig-like C2-type domains are found at residues 148–237 and 248–331; these read PPLP…QRIT and ASVR…VVVD. Asn281 carries N-linked (GlcNAc...) asparagine glycosylation. Residues 350–370 form a helical membrane-spanning segment; the sequence is VVVVGVIAALLFCLLVVVVVL. The Cytoplasmic segment spans residues 371-510; sequence MSRYHRRKAQ…IYINGRGHLV (140 aa). The segment covering 400 to 412 has biased composition (basic and acidic residues); the sequence is RLHSHHSDPRNQP. The disordered stretch occupies residues 400–475; the sequence is RLHSHHSDPR…GRAEEEEDRD (76 aa).

The protein belongs to the nectin family. As to quaternary structure, self-associates. Interacts via its Ig-like V-type domain with NECTIN1 Ig-like V-type domain. Interacts via its C-terminus with AFDN. Interacts with TIGIT.

The protein localises to the cell membrane. It is found in the cell junction. It localises to the adherens junction. In terms of biological role, seems to be involved in cell adhesion through trans-homophilic and -heterophilic interactions, the latter including specifically interactions with NECTIN1. Plays a role in the senescence-associated cell size enlargement via SFK/PI3K/Rac1 and thus promotes senescent cell survival. Also participates in the innate immune response by acting as a ligand for the receptor TIGIT to inhibit NK-cell activity. This chain is Nectin-4, found in Bos taurus (Bovine).